The primary structure comprises 478 residues: Adenylosuccinate lyase (478 aa).

Substrate is bound by residues 14 to 15, 81 to 83, and 107 to 108; these read RY, KHD, and TS. The Proton donor/acceptor role is filled by His-155. A substrate-binding site is contributed by Gln-237. Residue Ser-285 is the Proton donor/acceptor of the active site. Residues Arg-299, Arg-325, Ser-330, and Arg-334 each coordinate substrate.

The protein belongs to the lyase 1 family. Adenylosuccinate lyase subfamily. In terms of assembly, homotetramer. Residues from neighboring subunits contribute catalytic and substrate-binding residues to each active site.

It catalyses the reaction N(6)-(1,2-dicarboxyethyl)-AMP = fumarate + AMP. It carries out the reaction (2S)-2-[5-amino-1-(5-phospho-beta-D-ribosyl)imidazole-4-carboxamido]succinate = 5-amino-1-(5-phospho-beta-D-ribosyl)imidazole-4-carboxamide + fumarate. It functions in the pathway purine metabolism; AMP biosynthesis via de novo pathway; AMP from IMP: step 2/2. The protein operates within purine metabolism; IMP biosynthesis via de novo pathway; 5-amino-1-(5-phospho-D-ribosyl)imidazole-4-carboxamide from 5-amino-1-(5-phospho-D-ribosyl)imidazole-4-carboxylate: step 2/2. Its function is as follows. Catalyzes two non-sequential steps in de novo AMP synthesis: converts (S)-2-(5-amino-1-(5-phospho-D-ribosyl)imidazole-4-carboxamido)succinate (SAICAR) to fumarate plus 5-amino-1-(5-phospho-D-ribosyl)imidazole-4-carboxamide, and thereby also contributes to de novo IMP synthesis, and converts succinyladenosine monophosphate (SAMP) to AMP and fumarate. The protein is Adenylosuccinate lyase of Caenorhabditis briggsae.